We begin with the raw amino-acid sequence, 495 residues long: REST corepressor 3 (495 aa).

An ELM2 domain is found at 1–83; that stretch reads MRVGAEYQAR…KSLADLPNFT (83 aa). Lysine 20 participates in a covalent cross-link: Glycyl lysine isopeptide (Lys-Gly) (interchain with G-Cter in SUMO2). One can recognise an SANT 1 domain in the interval 84–135; that stretch reads PFPDEWTVEDKVLFEQAFSFHGKSFHRIQQMLPDKTIASLVKYYYSWKKTRS. The disordered stretch occupies residues 147–219; the sequence is LANRHNQGDS…SQRSKCRPPK (73 aa). 2 positions are modified to phosphoserine: serine 156 and serine 171. Residues 162-184 show a composition bias toward basic and acidic residues; it reads ETHPMDGNDSDYDPKKEAKKEGN. Residue lysine 193 forms a Glycyl lysine isopeptide (Lys-Gly) (interchain with G-Cter in SUMO2) linkage. The segment covering 205 to 217 has biased composition (basic residues); the sequence is QHRHHSQRSKCRP. A coiled-coil region spans residues 237-273; it reads AANTILRQLDMELISLKRQVQNAKQVNSALKQKMEGG. Lysine 285 is covalently cross-linked (Glycyl lysine isopeptide (Lys-Gly) (interchain with G-Cter in SUMO2)). One can recognise an SANT 2 domain in the interval 285–336; it reads KINARWTTEEQLLAVQGVRKYGKDFQAIADVIGNKTVGQVKNFFVNYRRRFN. The segment at 346–495 is disordered; sequence AEQGTQASNG…IQTDSQSSLH (150 aa). Over residues 348-357 the composition is skewed to polar residues; sequence QGTQASNGDA. Threonine 376 is modified (phosphothreonine). The segment covering 393–405 has biased composition (pro residues); the sequence is PSPPAPSSTPTPT. Over residues 419–428 the composition is skewed to low complexity; that stretch reads RPTLPAAPAL. Asymmetric dimethylarginine is present on residues arginine 445 and arginine 457. Residues 475–495 are compositionally biased toward polar residues; sequence VGGQQPPSLIGIQTDSQSSLH.

The protein belongs to the CoREST family.

The protein localises to the nucleus. In terms of biological role, may act as a component of a corepressor complex that represses transcription. This is REST corepressor 3 (RCOR3) from Homo sapiens (Human).